We begin with the raw amino-acid sequence, 627 residues long: Phosphomethylpyrimidine synthase (627 aa).

The span at 1-24 (MSATQKNNITRLEQLDRQSTQPFP) shows a compositional bias: polar residues. Positions 1 to 29 (MSATQKNNITRLEQLDRQSTQPFPNSRKV) are disordered. Substrate-binding positions include Asn231, Met260, Tyr289, His325, 345-347 (SRG), 386-389 (DGLR), and Glu425. His429 contacts Zn(2+). Residue Tyr452 participates in substrate binding. His493 contacts Zn(2+). Positions 573, 576, and 581 each coordinate [4Fe-4S] cluster.

Belongs to the ThiC family. In terms of assembly, homodimer. It depends on [4Fe-4S] cluster as a cofactor.

The enzyme catalyses 5-amino-1-(5-phospho-beta-D-ribosyl)imidazole + S-adenosyl-L-methionine = 4-amino-2-methyl-5-(phosphooxymethyl)pyrimidine + CO + 5'-deoxyadenosine + formate + L-methionine + 3 H(+). It participates in cofactor biosynthesis; thiamine diphosphate biosynthesis. Functionally, catalyzes the synthesis of the hydroxymethylpyrimidine phosphate (HMP-P) moiety of thiamine from aminoimidazole ribotide (AIR) in a radical S-adenosyl-L-methionine (SAM)-dependent reaction. The polypeptide is Phosphomethylpyrimidine synthase (Pseudomonas aeruginosa (strain LESB58)).